The chain runs to 879 residues: Alanine--tRNA ligase (879 aa).

4 residues coordinate Zn(2+): H566, H570, C668, and H672.

Belongs to the class-II aminoacyl-tRNA synthetase family. The cofactor is Zn(2+).

The protein resides in the cytoplasm. It catalyses the reaction tRNA(Ala) + L-alanine + ATP = L-alanyl-tRNA(Ala) + AMP + diphosphate. Its function is as follows. Catalyzes the attachment of alanine to tRNA(Ala) in a two-step reaction: alanine is first activated by ATP to form Ala-AMP and then transferred to the acceptor end of tRNA(Ala). Also edits incorrectly charged Ser-tRNA(Ala) and Gly-tRNA(Ala) via its editing domain. The sequence is that of Alanine--tRNA ligase from Clostridium botulinum (strain Loch Maree / Type A3).